We begin with the raw amino-acid sequence, 362 residues long: MPGIIDSSSKQSAIVGNSYGSTELSHNVPIPHAEGDNVVVRTRAVSVNPVDAKMMGPYVTAGAIAGCDFAGEIEAIGPEALSWGFKIGDRVCASIMGMNPLEPDHGAFAQHVATHANALVRIPETMSFEEAAALCTCFMTCGLALFQSLGLPGSPVKPSASATQVLVYGGATATGTAAIQLLRLAGFTPIATCSPHSNELVKTFGAEATFDYNDPECAAKIRAFTKNGLRYALDCITNRSSMQICYGSLGRVGGRYTALDPYPEDIAATRKIVKAAWVVGPIMLGHDIGWPAPHGRKADPDLFKFGMEWKKLVEGLMAKGVIKPHPLDVRKGGMERVIECMEAIRAKEVNGKKLVVSLRENH.

50–53 (VDAK) lines the NADP(+) pocket. Position 136–143 (136–143 (TCFMTCGL)) interacts with substrate. NADP(+) contacts are provided by residues 171-174 (ATAT), 194-197 (SPHS), Tyr-212, and 259-260 (LD). Substrate is bound at residue 280-284 (GPIML). 349–350 (VN) provides a ligand contact to NADP(+).

It belongs to the zinc-containing alcohol dehydrogenase family. In terms of assembly, monomer.

Its pathway is secondary metabolite biosynthesis. Functionally, trans-enoyl reductase; part of the gene cluster that mediates the biosynthesis of the trans-fused decalin-containing tetramic acid phomasetin, the stereochemical opposite of the HIV-1 integrase inhibitor equisetin. The PKS module of phm1 together with the enoylreductase phm4 catalyze the formation of the polyketide unit which is then conjugated to L-serine by the condensation domain of the phm1 NRPS module. Activity of the Dieckmann cyclase domain (RED) of phm1 results in release of the Dieckmann product intermediate. The Diels-Alderase phm7 then uses the Dieckmann product of phm1 as substrate and catalyzes the Diels-Alder cycloaddition to form the decalin ring of N-desmethylphomasetin. N-desmethylphomasetin is further methylated to phomasetin by the methyltransferase phm5. The chain is Trans-enoyl reductase phm4 from Pyrenochaetopsis sp.